Here is a 287-residue protein sequence, read N- to C-terminus: Putative holocytochrome-c1 synthase (287 aa).

The span at 1–12 shows a compositional bias: polar residues; the sequence is MRGFGSDSSQAS. Disordered stretches follow at residues 1-63 and 81-100; these read MRGF…QPSS and QSQS…SAPL. Low complexity-rich tracts occupy residues 31 to 63 and 81 to 92; these read QARA…QPSS and QSQSANSTQQAQ.

It belongs to the cytochrome c-type heme lyase family.

Its subcellular location is the mitochondrion inner membrane. It catalyses the reaction holo-[cytochrome c] = apo-[cytochrome c] + heme b. Probable lyase that catalyzes the covalent linking of the heme group to the cytochrome C apoprotein to produce the mature functional cytochrome. The chain is Putative holocytochrome-c1 synthase from Chaetomium thermophilum (strain DSM 1495 / CBS 144.50 / IMI 039719) (Thermochaetoides thermophila).